The sequence spans 137 residues: uncharacterized protein (137 aa).

The interval 31–83 (PASPINDKEKDKAGGRLPSGSEPRARAFCEAGADGEQGDPSPADTIKANQGHI) is disordered.

This is an uncharacterized protein from Homo sapiens (Human).